The primary structure comprises 368 residues: Seipin-1 (368 aa).

Transmembrane regions (helical) follow at residues 26–46, 101–121, and 292–312; these read WFMVLVTIQADLIYNALVVLS, VMVLALILAVVIGVGIVSLYV, and LCVWTSMYLYVAILTALLWCF. The tract at residues 344 to 368 is disordered; the sequence is MERRRRERRNQPRRRNFATTQKSYT. Residues 346–359 show a composition bias toward basic residues; sequence RRRRERRNQPRRRN.

This sequence belongs to the seipin family. As to expression, expressed in seeds and young seedlings. Not detected in leaves.

The protein resides in the endoplasmic reticulum membrane. Its function is as follows. Involved in lipid metabolism and lipid droplet (LD) morphology, number, and size. Facilitates the formation of large-sized LDs and modulates triacylglycerol accumulation. Induces probably a reorganization of the endoplasmic reticulum into LD-forming domains. The sequence is that of Seipin-1 from Arabidopsis thaliana (Mouse-ear cress).